The chain runs to 476 residues: Glutamate--tRNA ligase 1 (476 aa).

The short motif at 9–19 is the 'HIGH' region element; it reads PSPTGFLHIGG. The short motif at 238-242 is the 'KMSKS' region element; that stretch reads KLSKR. K241 contacts ATP.

This sequence belongs to the class-I aminoacyl-tRNA synthetase family. Glutamate--tRNA ligase type 1 subfamily. Monomer.

The protein localises to the cytoplasm. It carries out the reaction tRNA(Glu) + L-glutamate + ATP = L-glutamyl-tRNA(Glu) + AMP + diphosphate. Catalyzes the attachment of glutamate to tRNA(Glu) in a two-step reaction: glutamate is first activated by ATP to form Glu-AMP and then transferred to the acceptor end of tRNA(Glu). The sequence is that of Glutamate--tRNA ligase 1 from Bartonella tribocorum (strain CIP 105476 / IBS 506).